Here is a 428-residue protein sequence, read N- to C-terminus: 3-phosphoshikimate 1-carboxyvinyltransferase (428 aa).

Residues Lys-22, Ser-23, and Arg-27 each coordinate 3-phosphoshikimate. Lys-22 is a phosphoenolpyruvate binding site. Phosphoenolpyruvate contacts are provided by Gly-94 and Arg-122. The 3-phosphoshikimate site is built by Ser-167, Gln-169, Asp-314, and Lys-341. Residue Gln-169 coordinates phosphoenolpyruvate. Catalysis depends on Asp-314, which acts as the Proton acceptor. Positions 345 and 387 each coordinate phosphoenolpyruvate.

Belongs to the EPSP synthase family. As to quaternary structure, monomer.

It is found in the cytoplasm. The catalysed reaction is 3-phosphoshikimate + phosphoenolpyruvate = 5-O-(1-carboxyvinyl)-3-phosphoshikimate + phosphate. Its pathway is metabolic intermediate biosynthesis; chorismate biosynthesis; chorismate from D-erythrose 4-phosphate and phosphoenolpyruvate: step 6/7. Catalyzes the transfer of the enolpyruvyl moiety of phosphoenolpyruvate (PEP) to the 5-hydroxyl of shikimate-3-phosphate (S3P) to produce enolpyruvyl shikimate-3-phosphate and inorganic phosphate. In Geotalea uraniireducens (strain Rf4) (Geobacter uraniireducens), this protein is 3-phosphoshikimate 1-carboxyvinyltransferase.